Consider the following 450-residue polypeptide: Flavin-containing monooxygenase FMO GS-OX-like 5 (450 aa).

Position 17-22 (17-22 (GAGPAG)) interacts with FAD. 215–220 (GNSSSA) is a binding site for NADP(+).

It belongs to the FMO family. FAD is required as a cofactor.

Functionally, catalyzes the conversion of methylthioalkyl glucosinolates of any chain length into methylsulfinylalkyl glucosinolates. This chain is Flavin-containing monooxygenase FMO GS-OX-like 5, found in Arabidopsis thaliana (Mouse-ear cress).